The primary structure comprises 515 residues: Integrator complex subunit 14 (515 aa).

One can recognise a VWFA domain in the interval 2-204; the sequence is PTVVVMDVSL…KNVQSMFGKL (203 aa). Ser-10, Ser-12, and Thr-86 together coordinate Mg(2+). An N6-acetyllysine modification is found at Lys-418.

The protein belongs to the Integrator subunit 14 family. Component of the Integrator complex, composed of core subunits INTS1, INTS2, INTS3, INTS4, INTS5, INTS6, INTS7, INTS8, INTS9/RC74, INTS10, INTS11/CPSF3L, INTS12, INTS13, INTS14 and INTS15. The core complex associates with protein phosphatase 2A subunits PPP2CA and PPP2R1A, to form the Integrator-PP2A (INTAC) complex. INTS14 is part of the tail subcomplex, composed of INTS10, INTS13, INTS14 and INTS15.

The protein localises to the nucleus. In terms of biological role, component of the integrator complex, a multiprotein complex that terminates RNA polymerase II (Pol II) transcription in the promoter-proximal region of genes. The integrator complex provides a quality checkpoint during transcription elongation by driving premature transcription termination of transcripts that are unfavorably configured for transcriptional elongation: the complex terminates transcription by (1) catalyzing dephosphorylation of the C-terminal domain (CTD) of Pol II subunit POLR2A/RPB1 and SUPT5H/SPT5, (2) degrading the exiting nascent RNA transcript via endonuclease activity and (3) promoting the release of Pol II from bound DNA. The integrator complex is also involved in terminating the synthesis of non-coding Pol II transcripts, such as enhancer RNAs (eRNAs), small nuclear RNAs (snRNAs), telomerase RNAs and long non-coding RNAs (lncRNAs). Within the integrator complex, INTS14 is part of the integrator tail module that acts as a platform for the recruitment of transcription factors at promoters. In Rattus norvegicus (Rat), this protein is Integrator complex subunit 14.